Reading from the N-terminus, the 310-residue chain is Porphobilinogen deaminase (310 aa).

Residue Cys-242 is modified to S-(dipyrrolylmethanemethyl)cysteine.

The protein belongs to the HMBS family. Monomer. Requires dipyrromethane as cofactor.

The catalysed reaction is 4 porphobilinogen + H2O = hydroxymethylbilane + 4 NH4(+). Its pathway is porphyrin-containing compound metabolism; protoporphyrin-IX biosynthesis; coproporphyrinogen-III from 5-aminolevulinate: step 2/4. In terms of biological role, tetrapolymerization of the monopyrrole PBG into the hydroxymethylbilane pre-uroporphyrinogen in several discrete steps. This chain is Porphobilinogen deaminase, found in Shewanella baltica (strain OS223).